Here is a 504-residue protein sequence, read N- to C-terminus: Anaerobic nitric oxide reductase transcription regulator NorR (504 aa).

A 4-aspartylphosphate modification is found at D57. The 230-residue stretch at 187–416 folds into the Sigma-54 factor interaction domain; that stretch reads MIGLSPGMTQ…LEHAIHRAVV (230 aa). Residues 215–222 and 278–287 each bind ATP; these read GETGTGKE and ADNGTLFLDE. Residues 479-498 constitute a DNA-binding region (H-T-H motif); that stretch reads WAASARMLETDVANLHRLAK.

The protein operates within nitrogen metabolism; nitric oxide reduction. Functionally, required for the expression of anaerobic nitric oxide (NO) reductase, acts as a transcriptional activator for at least the norVW operon. Activation also requires sigma-54. The polypeptide is Anaerobic nitric oxide reductase transcription regulator NorR (Escherichia coli O7:K1 (strain IAI39 / ExPEC)).